The following is a 628-amino-acid chain: MQANINWLDNPEVFRVNQLPAHSDHPFFRDYREWQKQHSSYQQSLNGKWKFHFSANPMDRPQDFYQRDFDSSNFDSIPVPSEIELSNYTQNQYINVLFPWEGKIFRRPAYALDPNDHEEGSFSKGADNTVGSYLKRFDLSSALIGKDVHIKFEGVEQAMYVWLNGHFVGYAEDSFTPSEFDLTPYIQDKDNLLAVEVFKHSTASWLEDQDMFRFSGIFRSVELLGIPATHLMDMDLKPRVADNYQDGIFNLKLHFIGKKAGSFHLLVKDIKGHTLLEKNEDIKENVQINNEKFENVHLWNNHDPYLYQLLIEVYDEQQNLLELIPFQFGFRRIEISPEKVVLLNGKRLIINGVNRHEWDAKRGRSITMSDMTTDINTFKENNINAVRTCHYPNQIPWYYLCDQNGIYVMAENNLESHGTWQKMGEIEPSDNVPGSIPQWKEAVIDRARINYETFKNHTSILFWSLGNESYAGDNIIAMNEFYKSHDDTRLVHYEGVVHRPELKDKISDVESCMYLPPKKVEEYLQNDPPKPFMECEYMHDMGNSDGGMGSYIKLLDKYPQYFGGFIWDFIDQALLVHDEISGHDVLRYGGDFDDRHSDYEFSGDGLMFADRTPKPAMQEVRYYYGLHK.

Residue glutamate 468 is the Proton donor of the active site. The Nucleophile role is filled by glutamate 536.

The protein belongs to the glycosyl hydrolase 2 family. In terms of assembly, heterodimer of a large (LacL) and a small subunit (LacM).

It carries out the reaction Hydrolysis of terminal non-reducing beta-D-galactose residues in beta-D-galactosides.. Functionally, component of a beta-galactosidase. In Lactobacillus helveticus (Lactobacillus suntoryeus), this protein is Beta-galactosidase large subunit.